Consider the following 473-residue polypeptide: Ion-translocating oxidoreductase complex subunit C (473 aa).

4Fe-4S ferredoxin-type domains are found at residues 328 to 357 and 368 to 396; these read KNES…QQLY and TKKH…VKYF. The [4Fe-4S] cluster site is built by Cys-337, Cys-340, Cys-343, Cys-347, Cys-376, Cys-379, Cys-382, and Cys-386.

This sequence belongs to the 4Fe4S bacterial-type ferredoxin family. RnfC subfamily. In terms of assembly, the complex is composed of six subunits: RnfA, RnfB, RnfC, RnfD, RnfE and RnfG. Requires [4Fe-4S] cluster as cofactor.

It is found in the cell inner membrane. Part of a membrane-bound complex that couples electron transfer with translocation of ions across the membrane. This Buchnera aphidicola subsp. Acyrthosiphon pisum (strain APS) (Acyrthosiphon pisum symbiotic bacterium) protein is Ion-translocating oxidoreductase complex subunit C.